Here is a 164-residue protein sequence, read N- to C-terminus: Transmembrane protein 234 (164 aa).

3 helical membrane-spanning segments follow: residues 1-21, 82-102, and 112-132; these read MAAS…WGGT, LAVP…GKAL, and VAGM…SVPW.

This sequence belongs to the TMEM234 family.

Its subcellular location is the membrane. This is Transmembrane protein 234 (TMEM234) from Homo sapiens (Human).